Reading from the N-terminus, the 307-residue chain is Ribonuclease Z (307 aa).

H63, H65, D67, H68, H140, D211, and H269 together coordinate Zn(2+). The active-site Proton acceptor is D67.

It belongs to the RNase Z family. In terms of assembly, homodimer. Zn(2+) serves as cofactor.

It carries out the reaction Endonucleolytic cleavage of RNA, removing extra 3' nucleotides from tRNA precursor, generating 3' termini of tRNAs. A 3'-hydroxy group is left at the tRNA terminus and a 5'-phosphoryl group is left at the trailer molecule.. Its function is as follows. Zinc phosphodiesterase, which displays some tRNA 3'-processing endonuclease activity. Probably involved in tRNA maturation, by removing a 3'-trailer from precursor tRNA. The protein is Ribonuclease Z of Bacillus subtilis (strain 168).